We begin with the raw amino-acid sequence, 86 residues long: Small ribosomal subunit protein bS20 (86 aa).

This sequence belongs to the bacterial ribosomal protein bS20 family.

Its function is as follows. Binds directly to 16S ribosomal RNA. This Paenarthrobacter aurescens (strain TC1) protein is Small ribosomal subunit protein bS20.